The following is a 226-amino-acid chain: Putative mitochondrial outer membrane protein porin 5 (226 aa).

It belongs to the eukaryotic mitochondrial porin (TC 1.B.8.1) family.

It localises to the mitochondrion outer membrane. Functionally, putative channel that allows diffusion of small hydrophilic molecules through membranes. The protein is Putative mitochondrial outer membrane protein porin 5 (VDAC5) of Arabidopsis thaliana (Mouse-ear cress).